Reading from the N-terminus, the 86-residue chain is MHAYVYKSQRKQDTFVYLATRDDFSVIPADVQARLAPFAFVLDAALTPERRLAQADADTVRAALASHGFYLQLPKTVVLAGECDYD.

The YcgL domain occupies 1–83 (MHAYVYKSQR…PKTVVLAGEC (83 aa)).

In Xanthomonas campestris pv. campestris (strain ATCC 33913 / DSM 3586 / NCPPB 528 / LMG 568 / P 25), this protein is YcgL domain-containing protein XCC3997.